Reading from the N-terminus, the 313-residue chain is MNMIRTAMLLAFMTALFMAVGYLIGGSGGMMIALVIAAAMNLFSYWNADKMVLRMHHAVEVDERSAPEYYRIVSDLAQRAGLPMPRVYVIDNPQPNAFATGRNPQNAAVAATTGLLHSLTPEEVAGVMAHELAHVQNRDTLTMTITATLAGAISMLGNFAFFFGGNRDNNNPFGFIGILVAMIVAPLAAMVVQMAISRTREYAADRRGAEICGQPLWLASALAKISRAAHRVVNVDAERNPATAHLFIINPLSGQRMDNLFSTHPNTENRIAALQAMAGEFGNAPPASLREDEPGADGPWGRSASRARKGPWS.

Transmembrane regions (helical) follow at residues 7–24 and 29–46; these read AMLL…GYLI and GMMI…FSYW. Histidine 130 contributes to the Zn(2+) binding site. Residue glutamate 131 is part of the active site. Residue histidine 134 coordinates Zn(2+). A run of 2 helical transmembrane segments spans residues 145-165 and 172-192; these read ITAT…FFGG and PFGF…AMVV. Glutamate 201 provides a ligand contact to Zn(2+). A disordered region spans residues 282–313; the sequence is GNAPPASLREDEPGADGPWGRSASRARKGPWS.

This sequence belongs to the peptidase M48B family. Zn(2+) serves as cofactor.

The protein localises to the cell inner membrane. The chain is Protease HtpX homolog from Chelativorans sp. (strain BNC1).